We begin with the raw amino-acid sequence, 199 residues long: Glycerol-3-phosphate acyltransferase (199 aa).

The next 5 membrane-spanning stretches (helical) occupy residues alanine 5–cysteine 25, alanine 54–phenylalanine 74, alanine 82–phenylalanine 102, valine 114–phenylalanine 134, and tyrosine 154–isoleucine 174.

This sequence belongs to the PlsY family. As to quaternary structure, probably interacts with PlsX.

The protein resides in the cell inner membrane. It carries out the reaction an acyl phosphate + sn-glycerol 3-phosphate = a 1-acyl-sn-glycero-3-phosphate + phosphate. Its pathway is lipid metabolism; phospholipid metabolism. Functionally, catalyzes the transfer of an acyl group from acyl-phosphate (acyl-PO(4)) to glycerol-3-phosphate (G3P) to form lysophosphatidic acid (LPA). This enzyme utilizes acyl-phosphate as fatty acyl donor, but not acyl-CoA or acyl-ACP. The sequence is that of Glycerol-3-phosphate acyltransferase from Haemophilus ducreyi (strain 35000HP / ATCC 700724).